A 678-amino-acid chain; its full sequence is THO complex subunit 5 homolog B (678 aa).

Disordered stretches follow at residues 1–37 (MSSDSLKKRKPKVNRSEDGKRGRHDEQEGRYYSEEAE) and 294–329 (ALFKPPEDSQDDESDSDAEEEQTTKRRRPTLGVQLD). The Nuclear localization signal motif lies at 7 to 10 (KKRK). The span at 14–37 (NRSEDGKRGRHDEQEGRYYSEEAE) shows a compositional bias: basic and acidic residues. The segment covering 301–314 (DSQDDESDSDAEEE) has biased composition (acidic residues).

The protein belongs to the THOC5 family. As to quaternary structure, component of the THO subcomplex, which is composed of thoc1, thoc2, thoc3, thoc5, thoc6 and thoc7. Component of the transcription/export (TREX) complex at least composed of alyref/thoc4, ddx39b, sarnp/cip29, chtop and the THO subcomplex. Interacts with thoc7.

The protein localises to the nucleus. Its subcellular location is the nucleus speckle. It localises to the cytoplasm. In terms of biological role, component of the THO subcomplex of the TREX complex which is thought to couple mRNA transcription, processing and nuclear export, and which specifically associates with spliced mRNA and not with unspliced pre-mRNA. Plays a key structural role in the oligomerization of the THO-ddx39b complex. TREX is recruited to spliced mRNAs by a transcription-independent mechanism, binds to mRNA upstream of the exon-junction complex (EJC) and is recruited in a splicing- and cap-dependent manner to a region near the 5' end of the mRNA where it functions in mRNA export to the cytoplasm via the TAP/NXF1 pathway. May be involved in cell differentiation. This chain is THO complex subunit 5 homolog B (thoc5-b), found in Xenopus laevis (African clawed frog).